A 400-amino-acid polypeptide reads, in one-letter code: U-box domain-containing protein 37 (400 aa).

Residues 229-298 (KEWESAYLEE…RKAKEERDLL (70 aa)) are a coiled coil. The region spanning 324–398 (EAPQYFICPI…QEWLHASSSF (75 aa)) is the U-box domain.

The catalysed reaction is S-ubiquitinyl-[E2 ubiquitin-conjugating enzyme]-L-cysteine + [acceptor protein]-L-lysine = [E2 ubiquitin-conjugating enzyme]-L-cysteine + N(6)-ubiquitinyl-[acceptor protein]-L-lysine.. Its pathway is protein modification; protein ubiquitination. Its function is as follows. Functions as an E3 ubiquitin ligase. The sequence is that of U-box domain-containing protein 37 (PUB37) from Arabidopsis thaliana (Mouse-ear cress).